Here is a 393-residue protein sequence, read N- to C-terminus: MNDVFLKALPVLQKLTTAGFEAYFVGGSVRDYLLNRTISDVDIATSAFPEEVKEIFQTSYDTGIAHGTVTVRENNEFYEVTTFRTEGTYEDFRRPSEVTFIRSLEEDLKRRDFTMNAIAMDEHFALQDPFSGQLAIQNKEIKAVGKASERFHEDALRMMRAVRFLSQLDFELDKETEKALESQIELLQHTSVERITVEWLKMMKGKAAKRAIELLLKVKMETYLPGLKDEKSALSEFASWDWEKRTTEESIWLGLVVAVKPNNVNAFLKAWKLPNKTIQLVNKAYQDALKMKETWLKDELYHAGKAVFSLVNELNVIRGKENNQHKVSQAYEALPIHSKKDLAITGADLLKWSGESAGPWVKETLDKVECGVLSNEINNEKIQIKRWLGYHEE.

The ATP site is built by G27 and R30. Residues G27 and R30 each coordinate CTP. Residues D40 and D42 each coordinate Mg(2+). 5 residues coordinate ATP: R111, D154, R157, R160, and R163. Residues R111, D154, R157, R160, and R163 each coordinate CTP.

This sequence belongs to the tRNA nucleotidyltransferase/poly(A) polymerase family. Bacterial CCA-adding enzyme type 3 subfamily. In terms of assembly, homodimer. It depends on Mg(2+) as a cofactor.

It carries out the reaction a tRNA precursor + 2 CTP + ATP = a tRNA with a 3' CCA end + 3 diphosphate. The catalysed reaction is a tRNA with a 3' CCA end + 2 CTP + ATP = a tRNA with a 3' CCACCA end + 3 diphosphate. Catalyzes the addition and repair of the essential 3'-terminal CCA sequence in tRNAs without using a nucleic acid template. Adds these three nucleotides in the order of C, C, and A to the tRNA nucleotide-73, using CTP and ATP as substrates and producing inorganic pyrophosphate. tRNA 3'-terminal CCA addition is required both for tRNA processing and repair. Also involved in tRNA surveillance by mediating tandem CCA addition to generate a CCACCA at the 3' terminus of unstable tRNAs. While stable tRNAs receive only 3'-terminal CCA, unstable tRNAs are marked with CCACCA and rapidly degraded. The chain is CCA-adding enzyme from Listeria monocytogenes serotype 4b (strain F2365).